The following is a 574-amino-acid chain: Potassium-transporting ATPase potassium-binding subunit (574 aa).

Transmembrane regions (helical) follow at residues 7 to 27 (IELG…GTHL), 65 to 85 (IEYA…SYLI), 136 to 156 (FGLA…AAAL), 175 to 195 (LIRI…IILL), 264 to 284 (FVEM…FGLS), 292 to 312 (WSIW…CFIF), 390 to 410 (GLYG…LMIG), 427 to 447 (MAVL…ALAL), 494 to 514 (LLLG…ILAI), and 534 to 554 (GWLF…LNFF).

This sequence belongs to the KdpA family. In terms of assembly, the system is composed of three essential subunits: KdpA, KdpB and KdpC.

The protein resides in the cell inner membrane. Functionally, part of the high-affinity ATP-driven potassium transport (or Kdp) system, which catalyzes the hydrolysis of ATP coupled with the electrogenic transport of potassium into the cytoplasm. This subunit binds the periplasmic potassium ions and delivers the ions to the membrane domain of KdpB through an intramembrane tunnel. The protein is Potassium-transporting ATPase potassium-binding subunit of Methylacidiphilum infernorum (isolate V4) (Methylokorus infernorum (strain V4)).